A 526-amino-acid polypeptide reads, in one-letter code: Threonine synthase 1, chloroplastic (526 aa).

A chloroplast-targeting transit peptide spans 1-40 (MASSCLFNASVSSLNPKQDPIRRHRSTSLLRHRPVVISCT). Residues 142–144 (PYG), 165–167 (SAF), asparagine 172, leucine 173, lysine 181, and asparagine 187 each bind S-adenosyl-L-methionine. Lysine 203 bears the N6-(pyridoxal phosphate)lysine mark. Pyridoxal 5'-phosphate contacts are provided by residues 335 to 339 (GNLGN) and threonine 472.

It belongs to the threonine synthase family. Homodimer. Requires pyridoxal 5'-phosphate as cofactor.

Its subcellular location is the plastid. It is found in the chloroplast. It catalyses the reaction O-phospho-L-homoserine + H2O = L-threonine + phosphate. It participates in amino-acid biosynthesis; L-threonine biosynthesis; L-threonine from L-aspartate: step 5/5. Its activity is regulated as follows. Allosterically activated by S-adenosyl-L-methionine (SAM). Activated by S-adenosyl-L-ethionine, 5'-amino-5'-deoxyadenosine, sinefungin and 5'-deoxy-5-methylthioadenosine. Inhibited by AMP. Functionally, catalyzes the gamma-elimination of phosphate from L-phosphohomoserine and the beta-addition of water to produce L-threonine. This chain is Threonine synthase 1, chloroplastic (TS1), found in Arabidopsis thaliana (Mouse-ear cress).